Here is a 208-residue protein sequence, read N- to C-terminus: Protein GrpE (208 aa).

The segment covering 1-25 (MVDNKDFNEELKENIQEELDNETKA) has biased composition (basic and acidic residues). The tract at residues 1–38 (MVDNKDFNEELKENIQEELDNETKAENPNIDEEVEEVS) is disordered. A compositionally biased stretch (acidic residues) spans 29–38 (NIDEEVEEVS).

It belongs to the GrpE family. In terms of assembly, homodimer.

It localises to the cytoplasm. In terms of biological role, participates actively in the response to hyperosmotic and heat shock by preventing the aggregation of stress-denatured proteins, in association with DnaK and GrpE. It is the nucleotide exchange factor for DnaK and may function as a thermosensor. Unfolded proteins bind initially to DnaJ; upon interaction with the DnaJ-bound protein, DnaK hydrolyzes its bound ATP, resulting in the formation of a stable complex. GrpE releases ADP from DnaK; ATP binding to DnaK triggers the release of the substrate protein, thus completing the reaction cycle. Several rounds of ATP-dependent interactions between DnaJ, DnaK and GrpE are required for fully efficient folding. This is Protein GrpE from Clostridium perfringens (strain ATCC 13124 / DSM 756 / JCM 1290 / NCIMB 6125 / NCTC 8237 / Type A).